The primary structure comprises 126 residues: C-type natriuretic peptide (126 aa).

The first 23 residues, 1 to 23 (MHLSQLLACALLLALLSLRPSEA), serve as a signal peptide directing secretion. Residues 20–71 (PSEAKPGAPPKVPRTPSGEEVAEPQAAGGGQKKGDKTPGGGGANLKDDRSRL) form a disordered region. Positions 24-73 (KPGAPPKVPRTPSGEEVAEPQAAGGGQKKGDKTPGGGGANLKDDRSRLLR) are excised as a propeptide. Residues 46–62 (AGGGQKKGDKTPGGGGA) show a composition bias toward gly residues. The cysteines at positions 110 and 126 are disulfide-linked.

It belongs to the natriuretic peptide family. Post-translationally, degraded by IDE (in vitro).

Its subcellular location is the secreted. Its function is as follows. Hormone which plays a role in endochondral ossification through regulation of cartilaginous growth plate chondrocytes proliferation and differentiation. May also be vasoactive and natriuretic. Acts by specifically binding and stimulating NPR2 to produce cGMP. Binds the clearance receptor NPR3. The sequence is that of C-type natriuretic peptide (NPPC) from Bos taurus (Bovine).